Reading from the N-terminus, the 431-residue chain is Large envelope protein (431 aa).

Residue glycine 2 is the site of N-myristoyl glycine; by host attachment. The segment at 2–148 is pre-S1; it reads GNNIKVTFNP…PPLRDTHPHL (147 aa). Positions 2–207 are pre-S; that stretch reads GNNIKVTFNP…PSTTGDPALS (206 aa). The Virion surface; in external conformation portion of the chain corresponds to 2–214; sequence GNNIKVTFNP…ALSPEMSPSS (213 aa). The Intravirion; in internal conformation portion of the chain corresponds to 2-286; it reads GNNIKVTFNP…NGFRWMYLRR (285 aa). Asparagine 3 carries an N-linked (GlcNAc...) asparagine glycan. Residues 115–147 form a disordered region; sequence IPRGLVPPQTPTNRDQGRKPTPPTPPLRDTHPH. Positions 149 to 207 are pre-S2; sequence TMKNQTFHLQGFVDGLRDLTTTERQHNAYGDPFTTLSPAVPTVSTILSPPSTTGDPALS. The helical transmembrane segment at 215 to 235 threads the bilayer; that stretch reads LLGLLAGLQVVYFLWTKILTI. Residues 236–286 are Intravirion; in external conformation-facing; it reads AQNLDWWWTSLSFPGGIPECTGQNSQFQTCKHLPTSCPPTCNGFRWMYLRR. The helical transmembrane segment at 287–307 threads the bilayer; it reads FIIYLLVLLLCLIFLLVLLDW. The Virion surface segment spans residues 308 to 379; it reads KGLIPVCPLQ…WALARFSWLN (72 aa). N-linked (GlcNAc...) asparagine; by host glycosylation is present at asparagine 351. A helical transmembrane segment spans residues 380 to 400; sequence LLVPLLQWLGGISLIAWFLLI. The Intravirion segment spans residues 401–406; that stretch reads WMIWFW. Residues 407-429 traverse the membrane as a helical segment; sequence GPALLSILPPFIPIFVLFFLIWV. At 430–431 the chain is on the virion surface side; the sequence is YI.

This sequence belongs to the orthohepadnavirus major surface antigen family. As to quaternary structure, in its internal form (Li-HBsAg), interacts with the capsid protein and with the isoform S. Interacts with host chaperone CANX. In terms of assembly, associates with host chaperone CANX through its pre-S2 N glycan; this association may be essential for isoform M proper secretion. Interacts with isoform L. Interacts with the antigens of satellite virus HDV (HDVAgs); this interaction is required for encapsidation of HDV genomic RNA. In terms of processing, isoform M is N-terminally acetylated by host at a ratio of 90%, and N-glycosylated by host at the pre-S2 region. Post-translationally, myristoylated.

It localises to the virion membrane. Functionally, the large envelope protein exists in two topological conformations, one which is termed 'external' or Le-HBsAg and the other 'internal' or Li-HBsAg. In its external conformation the protein attaches the virus to cell receptors and thereby initiating infection. This interaction determines the species specificity and liver tropism. This attachment induces virion internalization predominantly through caveolin-mediated endocytosis. The large envelope protein also assures fusion between virion membrane and endosomal membrane. In its internal conformation the protein plays a role in virion morphogenesis and mediates the contact with the nucleocapsid like a matrix protein. The middle envelope protein plays an important role in the budding of the virion. It is involved in the induction of budding in a nucleocapsid independent way. In this process the majority of envelope proteins bud to form subviral lipoprotein particles of 22 nm of diameter that do not contain a nucleocapsid. The polypeptide is Large envelope protein (Woodchuck hepatitis B virus (isolate 7) (WHV)).